The primary structure comprises 160 residues: MAKKPKVPSNTIALNKRARHEYFIEDEIEAGLALQGWEVKSLRAGKANIGDSYVTFRHGEAFLFGATITPLNMASTHIVADPTRTRKLLLNQRELDSLFGKVNRDGMTVVALSLYWKNAWAKVKIGLAKGKKLHDKREDIKDREWHVTKQRIMKNAGRGS.

The protein belongs to the SmpB family.

Its subcellular location is the cytoplasm. In terms of biological role, required for rescue of stalled ribosomes mediated by trans-translation. Binds to transfer-messenger RNA (tmRNA), required for stable association of tmRNA with ribosomes. tmRNA and SmpB together mimic tRNA shape, replacing the anticodon stem-loop with SmpB. tmRNA is encoded by the ssrA gene; the 2 termini fold to resemble tRNA(Ala) and it encodes a 'tag peptide', a short internal open reading frame. During trans-translation Ala-aminoacylated tmRNA acts like a tRNA, entering the A-site of stalled ribosomes, displacing the stalled mRNA. The ribosome then switches to translate the ORF on the tmRNA; the nascent peptide is terminated with the 'tag peptide' encoded by the tmRNA and targeted for degradation. The ribosome is freed to recommence translation, which seems to be the essential function of trans-translation. In Haemophilus ducreyi (strain 35000HP / ATCC 700724), this protein is SsrA-binding protein.